We begin with the raw amino-acid sequence, 37 residues long: Large ribosomal subunit protein bL36 (37 aa).

This sequence belongs to the bacterial ribosomal protein bL36 family.

The chain is Large ribosomal subunit protein bL36 from Acidothermus cellulolyticus (strain ATCC 43068 / DSM 8971 / 11B).